An 86-amino-acid polypeptide reads, in one-letter code: Toxin CSTX-20 (86 aa).

In terms of tissue distribution, expressed by the venom gland.

It is found in the secreted. This chain is Toxin CSTX-20, found in Cupiennius salei (American wandering spider).